A 309-amino-acid chain; its full sequence is MLKFFAPASIGNLGVGFDVLGMAISPIDGTLLGDCLSIAPAEQFDLEIKGSFSDKLPKEPKKNIVFRCWKNFCQKIGKDVPVQMRLEKNMPVGSGLGSSACSVVAALVAMNEYCAHPLDQNALLSLMGEMEGLISGNVHYDNVAPCYLGGLQFILDTQSRISQSIPLFSDWLWVLAYPGIKISTAKARNVLPVHYSKRDCVDHGRYLAGFIHACYSQQPDLAAELMKDVIAEPYRLPMLPSFLTARQKAKEMGALATGISGSGPTLFSVCPNLKTATSISDWLQHHYLENDAGFVHICRLDSLGARSVG.

ATP is bound at residue 91 to 101 (PVGSGLGSSAC).

The protein belongs to the GHMP kinase family. Homoserine kinase subfamily.

It is found in the cytoplasm. The catalysed reaction is L-homoserine + ATP = O-phospho-L-homoserine + ADP + H(+). Its pathway is amino-acid biosynthesis; L-threonine biosynthesis; L-threonine from L-aspartate: step 4/5. Functionally, catalyzes the ATP-dependent phosphorylation of L-homoserine to L-homoserine phosphate. This Hamiltonella defensa subsp. Acyrthosiphon pisum (strain 5AT) protein is Homoserine kinase.